Reading from the N-terminus, the 484-residue chain is MLLRSLTSAFVLSAGLAQAASSSNSSTPSIEIKGNAFFNSESGERFYIRGVDYQPGGSSNLTDPLADASVCDRDVPVLKDLGINTVRVYTVDNSQDHSHCMKLLQENGIYLILDVNTPTSAISRYDPACSYNADYLQNVFATIDTFADYDNVLGFFAGNEVINSVNTTNTATYVKAVVRDMKKYIKARKYRQIPVGYSAADIVANRQLAAEYFNCGDEADARIDMFGVNDYSWCGESSFVVSGYSTKMKLYQDYSVPVFLSEFGCNQVKSSRPFTEIEAIYSTQMSSVFSGGLVYEYSNETNNYGLVQIDGDKVTKLTDFENLKNEYSKVSNPEGNGGYSTSNNYSTCPDYEKGVWEANNTLPAMPSAASAYFTSGAGSPMGTGIATQQSCDAKDDDDEEDDDTSSSSSSSSSSSSSASSSSESSSSTSKASSSSPSASETSLLKSAASATSSSQSSSKSKGAAGIIEIPLIFRALAELYNLVL.

The N-terminal stretch at Met1 to Ala19 is a signal peptide. 2 N-linked (GlcNAc...) asparagine glycosylation sites follow: Asn24 and Asn60. A disulfide bridge links Cys71 with Cys100. (1,3-beta-D-glucosyl)n contacts are provided by Tyr89, Asn159, and Glu160. Glu160 (proton donor) is an active-site residue. The N-linked (GlcNAc...) asparagine glycan is linked to Asn166. Residues Asp201 and Arg206 each coordinate (1,3-beta-D-glucosyl)n. Disulfide bonds link Cys215/Cys348 and Cys234/Cys265. Catalysis depends on Glu262, which acts as the Nucleophile. Tyr295 is a binding site for (1,3-beta-D-glucosyl)n. Residues Asn299, Asn344, and Asn359 are each glycosylated (N-linked (GlcNAc...) asparagine). The disordered stretch occupies residues Thr383–Gly462. The span at Lys394–Thr404 shows a compositional bias: acidic residues. Residues Ser405–Gly462 are compositionally biased toward low complexity. Residue Gly462 is the site of GPI-anchor amidated glycine attachment. A propeptide spans Ala463–Leu484 (removed in mature form).

The protein belongs to the glycosyl hydrolase 72 family. In terms of processing, the GPI-anchor is attached to the protein in the endoplasmic reticulum and serves to target the protein to the cell surface. There, the glucosamine-inositol phospholipid moiety is cleaved off and the GPI-modified mannoprotein is covalently attached via its lipidless GPI glycan remnant to the 1,6-beta-glucan of the outer cell wall layer.

The protein localises to the secreted. It localises to the cell wall. Its subcellular location is the membrane. Functionally, splits internally a 1,3-beta-glucan molecule and transfers the newly generated reducing end (the donor) to the non-reducing end of another 1,3-beta-glucan molecule (the acceptor) forming a 1,3-beta linkage, resulting in the elongation of 1,3-beta-glucan chains in the cell wall. Involved in cell wall biosynthesis and morphogenesis. This chain is 1,3-beta-glucanosyltransferase GAS5 (GAS5), found in Saccharomyces cerevisiae (strain ATCC 204508 / S288c) (Baker's yeast).